Reading from the N-terminus, the 479-residue chain is Ribosomal RNA small subunit methyltransferase F (479 aa).

S-adenosyl-L-methionine is bound by residues 125 to 131 (AAAPGSK), E149, D176, and D194. C247 serves as the catalytic Nucleophile.

Belongs to the class I-like SAM-binding methyltransferase superfamily. RsmB/NOP family.

The protein resides in the cytoplasm. The catalysed reaction is cytidine(1407) in 16S rRNA + S-adenosyl-L-methionine = 5-methylcytidine(1407) in 16S rRNA + S-adenosyl-L-homocysteine + H(+). Specifically methylates the cytosine at position 1407 (m5C1407) of 16S rRNA. The polypeptide is Ribosomal RNA small subunit methyltransferase F (Escherichia coli (strain SMS-3-5 / SECEC)).